We begin with the raw amino-acid sequence, 320 residues long: ATPase H(+)-transporting accessory protein 2 (320 aa).

A signal peptide spans 1–17 (MLRVFVIFSLFIAAINA). The Lumenal portion of the chain corresponds to 18–277 (SGEFTVLNRP…YGSDYPVIFN (260 aa)). The chain crosses the membrane as a helical span at residues 278–298 (IILWFMVVFGLSLLAICYAIA). Over 299–320 (AMDPGRDSIIYRMTSTRIKKDN) the chain is Cytoplasmic. The short motif at 317-320 (KKDN) is the Mediates retrograde transport to the ER element.

Interacts with fz and fz2. Interacts (via N-terminus) with stan. As an accessory component of the multisubunit proton-transporting vacuolar (V)-ATPase protein pump, might interacts with VhaAC45. In terms of processing, proteolytically cleaved by a furin-like convertase in the trans-Golgi network to generate N- and C-terminal fragments. Cleavage is reduced in the fat body.

The protein resides in the cell membrane. It is found in the endoplasmic reticulum membrane. The protein localises to the vesicle. Its subcellular location is the apical cell membrane. It localises to the golgi apparatus membrane. The protein resides in the secreted. In terms of biological role, multifunctional protein which functions as a transmembrane receptor in the planar cell polarity (PCP) and is involved in the assembly of the proton-transporting vacuolar (V)-ATPase protein pump. As transmembrane receptor mediates fz/PCP signaling through interaction with fz and stabilizes asymmetric PCP domains through its interaction with stan. Also mediates Wnt/beta-cat signaling through interaction with fz/fz2. Probably by controlling the assembly of the V-ATPase pump and thus the acidification of the endo-lysosomal system, plays a role in many neuronal processes including synapse morphology and synaptic transmission. Its function is as follows. Stabilizes asymmetric Planar Cell Polarity (PCP) domains through its interaction with stan. This is ATPase H(+)-transporting accessory protein 2 from Drosophila melanogaster (Fruit fly).